The primary structure comprises 923 residues: MQGDSSPSPTTTSSPLIRPINRNVIHRICSGQVILDLSSAVKELVENSLDAGATSIEINLRDYGEDYFQVIDNGCGISPTNFKVLALKHHTSKLEDFTDLLNLTTYGFRGEALSSLCALGNLTVETRTKNEPVATLLTFDHSGLLTAEKKTARQIGTTVTVRKLFSNLPVRSKEFKRNIRKEYGKLVSLLNAYALIAKGVRFVCSNTTGKNPKSVVLNTQGRGSLKDNIITVFGISTFTSLQPVSICVSEDCRVEGFLSKPGQGTGRNLADRQYFFINGRPVDMPKVSKLVNELYKDTSSRKYPVTILDFIVPGGACDLNVTPDKRKVFFSDETSVIGSLREGLNEIYSSSNASYIVNRFEENSEQPDKAGVSSFQKKSNLLSEGIVLDVSSKTRLGEAIEKENPSLREVEIDNSSPMEKFKFEIKACGTKKGEGSLSVHDVTHLDKTPSKGLPQLNVTEKVTDASKDLSSRSSFAQSTLNTFVTMGKRKHENISTILSETPVLRNQTSSYRVEKSKFEVRALASRCLVEGDQLDDMVISKEDMTPSERDSELGNRISPGTQADNVERHEREHEKPIRFEEPTSDNTLTKGDVERVSEDNPRCSQPLRSVATVLDSPAQSTGPKMFSTLEFSFQNLRTRRLERLSRLQSTGYVSKCMNTPQPKKCFAAATLELSQPDDEERKARALAAATSELERLFRKEDFRRMQVLGQFNLGFIIAKLERDLFIVDQHAADEKFNFEHLARSTVLNQQPLLQPLNLELSPEEEVTVLMHMDIIRENGFLLEENPSAPPGKHFRLRAIPYSKNITFGVEDLKDLISTLGDNHGECSVASSYKTSKTDSICPSRVRAMLASRACRSSVMIGDPLRKNEMQKIVEHLADLESPWNCPHGRPTMRHLVDLTTLLTLPDDDNVNDDDDDDATISLA.

Composition is skewed to basic and acidic residues over residues 543-553 (DMTPSERDSEL), 565-581 (NVER…RFEE), and 591-601 (GDVERVSEDNP). Residues 543 to 603 (DMTPSERDSE…ERVSEDNPRC (61 aa)) are disordered.

This sequence belongs to the DNA mismatch repair MutL/HexB family. As to quaternary structure, heterodimer of MLH1 and PMS1, called MutLalpha, which is the major MMR MutL activity correcting base-base mismatches as well as IDLs. The heterodimer binds double strand DNA independently of a mismatch with positive cooperativity and has more than one DNA binding site. Forms a ternary complex with either the MSH2-MSH6 (MutSalpha) or the MSH2-MSH3 heterodimer (MutSbeta), which recognize and bind to mismatch DNA. Ternary complex formation is promoted by ATP binding. As to expression, expressed at very low levels in mature leaves. Detected in rapidly dividing tissues.

It localises to the nucleus. Functionally, required for DNA mismatch repair (MMR), correcting base-base mismatches and insertion-deletion loops (IDLs) resulting from DNA replication, DNA damage or from recombination events between non-identical sequences during meiosis. Component of the MutLalpha heterodimer that forms a ternary complex with the MutS heterodimers, which initially recognize the DNA mismatches. This complex is thought to be responsible for directing the downstream MMR events, including strand discrimination, excision, and resynthesis. Plays a major role in maintaining the genetic stability of simple sequence repeats and in the repair of heteroduplex sites present in meiotic recombination intermediates. Does not seem to be required for homologous somatic recombination. The protein is DNA mismatch repair protein PMS1 (PMS1) of Arabidopsis thaliana (Mouse-ear cress).